The following is a 294-amino-acid chain: tRNA dimethylallyltransferase (294 aa).

10–17 lines the ATP pocket; that stretch reads GPTAVGKT. A substrate-binding site is contributed by 12–17; the sequence is TAVGKT. Residues 35 to 38 are interaction with substrate tRNA; the sequence is DSQQ.

Belongs to the IPP transferase family. In terms of assembly, monomer. Requires Mg(2+) as cofactor.

The enzyme catalyses adenosine(37) in tRNA + dimethylallyl diphosphate = N(6)-dimethylallyladenosine(37) in tRNA + diphosphate. In terms of biological role, catalyzes the transfer of a dimethylallyl group onto the adenine at position 37 in tRNAs that read codons beginning with uridine, leading to the formation of N6-(dimethylallyl)adenosine (i(6)A). The sequence is that of tRNA dimethylallyltransferase from Streptococcus suis (strain 05ZYH33).